We begin with the raw amino-acid sequence, 734 residues long: Cleavage stimulation factor subunit 77 (734 aa).

12 HAT repeats span residues 20–52 (SPIA…AQMA), 54–85 (NNDD…FIRK), 93–128 (EGQE…FLKS), 139–172 (HRKT…FENT), 198–237 (ERKK…FEKG), 246–278 (SSTK…WHVK), 280–312 (GSTD…MEES), 314–345 (GAIQ…FLRR), 347–379 (EGVE…MAFC), 382–414 (KEPK…FLTR), 416–450 (NDDR…FEQT), and 474–505 (EGSS…DLDH). The tract at residues 637–734 (VKQSFAAKGN…FSGELSGSTG (98 aa)) is disordered. The span at 664 to 677 (LPRDRRATKRKDSD) shows a compositional bias: basic and acidic residues. The span at 709–734 (ATSSQTPTGSTSYGSAFSGELSGSTG) shows a compositional bias: polar residues.

Homodimer. Belongs to the CSTF complex. Forms a complex with cleavage and polyadenylation specificity factor (CPSF) subunits CPSF30, CSTF64, PCFS1, PCFS5 and FIPS5.

It is found in the nucleus. Its function is as follows. One of the multiple factors required for polyadenylation and 3'-end cleavage of pre-mRNAs. Required for the targeted 3' processing of antisense transcripts that triggers transcriptional silencing of the corresponding sense gene. The protein is Cleavage stimulation factor subunit 77 of Arabidopsis thaliana (Mouse-ear cress).